Reading from the N-terminus, the 113-residue chain is Teretoxin Tan14.1 (113 aa).

The N-terminal stretch at 1–21 (MALEAQMTLRMFVLVAMASTV) is a signal peptide. Positions 22–86 (HVLSSSFSED…DETSSRTGKR (65 aa)) are excised as a propeptide.

It belongs to the teretoxin N (TN) superfamily. Post-translationally, contains 2 disulfide bonds. Expressed by the venom duct.

It localises to the secreted. The protein is Teretoxin Tan14.1 of Terebra anilis (Auger snail).